The chain runs to 287 residues: Cell wall-binding protein YocH (287 aa).

The N-terminal stretch at 1-25 (MKKTIMSFVAVAALSTTAFGAHASA) is a signal peptide. LysM domains lie at 26 to 69 (KEIT…KLTI) and 78 to 121 (GQYT…TLSV). Residues 130 to 143 (TATENAQTNAPQAA) are compositionally biased toward low complexity. Positions 130-193 (TATENAQTNA…SNTNNQEASK (64 aa)) are disordered. Residues 165–181 (QETKAEAETSVNTEEKA) are compositionally biased toward basic and acidic residues. Polar residues predominate over residues 182 to 193 (VQSNTNNQEASK).

Its subcellular location is the secreted. The protein resides in the cell wall. The chain is Cell wall-binding protein YocH (yocH) from Bacillus subtilis (strain 168).